The following is a 217-amino-acid chain: Pyridoxine/pyridoxamine 5'-phosphate oxidase (217 aa).

Residues 13–16 and Lys71 contribute to the substrate site; that span reads RREY. FMN contacts are provided by residues 66–71, 81–82, Arg87, Lys88, and Gln110; these read RIVLLK and YT. Substrate contacts are provided by Tyr128, Arg132, and Ser136. Residues 145–146 and Trp190 contribute to the FMN site; that span reads QS. 196–198 lines the substrate pocket; it reads RLH. FMN is bound at residue Arg200.

The protein belongs to the pyridoxamine 5'-phosphate oxidase family. In terms of assembly, homodimer. It depends on FMN as a cofactor.

It carries out the reaction pyridoxamine 5'-phosphate + O2 + H2O = pyridoxal 5'-phosphate + H2O2 + NH4(+). The catalysed reaction is pyridoxine 5'-phosphate + O2 = pyridoxal 5'-phosphate + H2O2. Its pathway is cofactor metabolism; pyridoxal 5'-phosphate salvage; pyridoxal 5'-phosphate from pyridoxamine 5'-phosphate: step 1/1. It participates in cofactor metabolism; pyridoxal 5'-phosphate salvage; pyridoxal 5'-phosphate from pyridoxine 5'-phosphate: step 1/1. In terms of biological role, catalyzes the oxidation of either pyridoxine 5'-phosphate (PNP) or pyridoxamine 5'-phosphate (PMP) into pyridoxal 5'-phosphate (PLP). This is Pyridoxine/pyridoxamine 5'-phosphate oxidase from Yersinia pestis bv. Antiqua (strain Antiqua).